The primary structure comprises 313 residues: Beta-lactamase FAR-1 (313 aa).

The signal sequence occupies residues 1–28; the sequence is MPGVDISFLKKSGRRTMAAAAVIALLGG. The N-palmitoyl cysteine moiety is linked to residue C29. A lipid anchor (S-diacylglycerol cysteine) is attached at C29. The active-site Acyl-ester intermediate is the S94. Substrate is bound at residue S154. E190 serves as the catalytic Proton acceptor. 258 to 260 contributes to the substrate binding site; sequence KTG.

The protein belongs to the class-A beta-lactamase family.

It is found in the cell membrane. It catalyses the reaction a beta-lactam + H2O = a substituted beta-amino acid. Inhibited by clavulanic acid, and at a low level by tazobactam and sulbactam. Confers high levels of resistance to amoxicillin, benzylpenicillin, piperacillin, ticarcillin and cephalothin. Also hydrolyzes aztreonam at a low level. Not active against ceftazidime, cefotaxime and imipenem. In Nocardia farcinica (strain IFM 10152), this protein is Beta-lactamase FAR-1 (bla).